The primary structure comprises 138 residues: Cyclin-dependent kinase 4 inhibitor B (138 aa).

The stretch at 13–39 is one ANK 1; truncated repeat; sequence GSDEGLASAAARGLVEKVRQLLEAGAD. ANK repeat units lie at residues 46–74, 79–108, and 112–138; these read FGRRAIQVMMMGSARVAELLLLHGAEPNC, TLTRPVHDAAREGFLDTLVVLHRAGARLDV, and WGRLPVDLAEERGHRDVAGYLRTATGD.

This sequence belongs to the CDKN2 cyclin-dependent kinase inhibitor family. In terms of assembly, heterodimer of CDKN2B with CDK4 or CDK6. Isoform 2 does not interact with CDK4 nor CDK6. As to expression, isoform 2 is expressed in normal (keratinocytes, fibroblasts) and tumor cell lines.

The protein localises to the cytoplasm. Functionally, interacts strongly with CDK4 and CDK6. Potent inhibitor. Potential effector of TGF-beta induced cell cycle arrest. The chain is Cyclin-dependent kinase 4 inhibitor B (CDKN2B) from Homo sapiens (Human).